Consider the following 264-residue polypeptide: Hydroxyethylthiazole kinase (264 aa).

Residue Met-45 coordinates substrate. ATP-binding residues include Arg-121 and Ser-167. Residue Gly-194 coordinates substrate.

This sequence belongs to the Thz kinase family. Mg(2+) serves as cofactor.

The catalysed reaction is 5-(2-hydroxyethyl)-4-methylthiazole + ATP = 4-methyl-5-(2-phosphooxyethyl)-thiazole + ADP + H(+). It participates in cofactor biosynthesis; thiamine diphosphate biosynthesis; 4-methyl-5-(2-phosphoethyl)-thiazole from 5-(2-hydroxyethyl)-4-methylthiazole: step 1/1. In terms of biological role, catalyzes the phosphorylation of the hydroxyl group of 4-methyl-5-beta-hydroxyethylthiazole (THZ). The protein is Hydroxyethylthiazole kinase of Aliivibrio salmonicida (strain LFI1238) (Vibrio salmonicida (strain LFI1238)).